Consider the following 294-residue polypeptide: Bifunctional protein FolD 1 (294 aa).

NADP(+) is bound by residues 165-167 (GRS), S190, and T231.

It belongs to the tetrahydrofolate dehydrogenase/cyclohydrolase family. Homodimer.

The enzyme catalyses (6R)-5,10-methylene-5,6,7,8-tetrahydrofolate + NADP(+) = (6R)-5,10-methenyltetrahydrofolate + NADPH. The catalysed reaction is (6R)-5,10-methenyltetrahydrofolate + H2O = (6R)-10-formyltetrahydrofolate + H(+). It participates in one-carbon metabolism; tetrahydrofolate interconversion. Its function is as follows. Catalyzes the oxidation of 5,10-methylenetetrahydrofolate to 5,10-methenyltetrahydrofolate and then the hydrolysis of 5,10-methenyltetrahydrofolate to 10-formyltetrahydrofolate. This chain is Bifunctional protein FolD 1, found in Paenarthrobacter aurescens (strain TC1).